The primary structure comprises 215 residues: Vesicle-trafficking protein SEC22b (215 aa).

The Cytoplasmic portion of the chain corresponds to 1-190 (MVLLTMIARV…RQDAKYLNMR (190 aa)). The region spanning 6-119 (MIARVADGLP…YSFIEFDNYI (114 aa)) is the Longin domain. The region spanning 134 to 194 (NLSSVNTELQ…KYLNMRSTYA (61 aa)) is the v-SNARE coiled-coil homology domain. The chain crosses the membrane as a helical span at residues 191–213 (STYAKLAAVAVFSVMLIVYIRFW). At 214–215 (WL) the chain is on the lumenal side.

It belongs to the synaptobrevin family. In terms of assembly, component of 2 distinct SNARE complexes.

It localises to the endoplasmic reticulum membrane. Its subcellular location is the endoplasmic reticulum-Golgi intermediate compartment membrane. It is found in the golgi apparatus. The protein localises to the cis-Golgi network membrane. The protein resides in the trans-Golgi network membrane. It localises to the melanosome. Functionally, SNARE involved in targeting and fusion of ER-derived transport vesicles with the Golgi complex as well as Golgi-derived retrograde transport vesicles with the ER. This Xenopus tropicalis (Western clawed frog) protein is Vesicle-trafficking protein SEC22b.